The sequence spans 273 residues: UPF0380 protein YafZ (273 aa).

Belongs to the UPF0380 family.

The protein is UPF0380 protein YafZ (yafZ) of Escherichia coli (strain K12).